A 142-amino-acid polypeptide reads, in one-letter code: Large ribosomal subunit protein uL11 (142 aa).

This sequence belongs to the universal ribosomal protein uL11 family. In terms of assembly, part of the ribosomal stalk of the 50S ribosomal subunit. Interacts with L10 and the large rRNA to form the base of the stalk. L10 forms an elongated spine to which L12 dimers bind in a sequential fashion forming a multimeric L10(L12)X complex. Post-translationally, one or more lysine residues are methylated.

In terms of biological role, forms part of the ribosomal stalk which helps the ribosome interact with GTP-bound translation factors. This Shewanella pealeana (strain ATCC 700345 / ANG-SQ1) protein is Large ribosomal subunit protein uL11.